Reading from the N-terminus, the 453-residue chain is tRNA modification GTPase MnmE (453 aa).

Positions 22, 79, and 119 each coordinate (6S)-5-formyl-5,6,7,8-tetrahydrofolate. A TrmE-type G domain is found at 215-376; the sequence is GMKVVIAGRP…LREHLKACMG (162 aa). Asn-225 provides a ligand contact to K(+). Residues 225–230, 244–250, 269–272, and 334–337 each bind GTP; these read NAGKSS, TEIAGTT, DTAG, and NKAD. Ser-229 contacts Mg(2+). K(+) contacts are provided by Thr-244, Ile-246, and Thr-249. Residue Thr-250 coordinates Mg(2+). Residue Lys-453 participates in (6S)-5-formyl-5,6,7,8-tetrahydrofolate binding.

The protein belongs to the TRAFAC class TrmE-Era-EngA-EngB-Septin-like GTPase superfamily. TrmE GTPase family. In terms of assembly, homodimer. Heterotetramer of two MnmE and two MnmG subunits. It depends on K(+) as a cofactor.

It is found in the cytoplasm. In terms of biological role, exhibits a very high intrinsic GTPase hydrolysis rate. Involved in the addition of a carboxymethylaminomethyl (cmnm) group at the wobble position (U34) of certain tRNAs, forming tRNA-cmnm(5)s(2)U34. The sequence is that of tRNA modification GTPase MnmE from Aeromonas salmonicida (strain A449).